The primary structure comprises 87 residues: Small ribosomal subunit protein bS20 (87 aa).

Over residues 1–12 (MANHKSALKRNR) the composition is skewed to basic residues. The tract at residues 1–21 (MANHKSALKRNRQAAVRNARN) is disordered.

It belongs to the bacterial ribosomal protein bS20 family.

In terms of biological role, binds directly to 16S ribosomal RNA. The chain is Small ribosomal subunit protein bS20 from Syntrophotalea carbinolica (strain DSM 2380 / NBRC 103641 / GraBd1) (Pelobacter carbinolicus).